Here is a 448-residue protein sequence, read N- to C-terminus: Nucleoprotein (448 aa).

Residues 1 to 55 form a disordered region; the sequence is MSFTPGKQSSSRASSGNRSGNGILKWADQSDQSRNVQTRGRRAQPKQTATSQQPS. The span at 9–22 shows a compositional bias: low complexity; it reads SSSRASSGNRSGNG. 2 stretches are compositionally biased toward polar residues: residues 29 to 38 and 45 to 55; these read QSDQSRNVQT and PKQTATSQQPS. The segment at 52–194 is RNA-binding; the sequence is QQPSGGNVVP…GYYIEGSGRS (143 aa). A CoV N NTD domain is found at 61 to 190; the sequence is PYYSWFSGIT…VLPQGYYIEG (130 aa). RNA-binding residues include Arg106, Arg122, and Arg164. Residues 157–231 are disordered; that stretch reads TPADILDRDP…RTPTSGVTPD (75 aa). Ser167 carries the phosphoserine; by host modification. Thr174 is modified (phosphothreonine; by host). A Phosphoserine; by host modification is found at Ser191. Low complexity predominate over residues 193-223; the sequence is RSAPNSRSTSRASSRASSAGSRSRANSGNRT. In terms of domain architecture, CoV N CTD spans 259–384; it reads AKEIRQKILN…ENLNAYQQQD (126 aa). The interval 266–384 is dimerization; it reads ILNKPRQKRS…ENLNAYQQQD (119 aa). Residues 385 to 448 are disordered; that stretch reads GMMNMSPKPQ…EPYTEDTSEI (64 aa). Ser390 bears the Phosphoserine; by host mark. Polar residues predominate over residues 399–409; that stretch reads QKNGQGENDNI. Over residues 422–439 the composition is skewed to basic and acidic residues; it reads KSRELTAEDISLLKKMDE. Ser423 is subject to Phosphoserine; by host. Residue Thr427 is modified to Phosphothreonine; by host.

The protein belongs to the betacoronavirus nucleocapsid protein family. Homooligomer. Both monomeric and oligomeric forms interact with RNA. Interacts with protein M. Interacts with NSP3; this interaction serves to tether the genome to the newly translated replicase-transcriptase complex at a very early stage of infection. ADP-ribosylated. The ADP-ribosylation is retained in the virion during infection. Post-translationally, phosphorylated on serine and threonine residues.

The protein resides in the virion. Its subcellular location is the host endoplasmic reticulum-Golgi intermediate compartment. It localises to the host Golgi apparatus. Functionally, packages the positive strand viral genome RNA into a helical ribonucleocapsid (RNP) and plays a fundamental role during virion assembly through its interactions with the viral genome and membrane protein M. Plays an important role in enhancing the efficiency of subgenomic viral RNA transcription as well as viral replication. The protein is Nucleoprotein of Bovine coronavirus (strain F15) (BCoV).